We begin with the raw amino-acid sequence, 266 residues long: Dihydropteroate synthase (266 aa).

One can recognise a Pterin-binding domain in the interval Ala-12–Ala-260. Residue Asn-19 coordinates Mg(2+). (7,8-dihydropterin-6-yl)methyl diphosphate is bound by residues Thr-59, Asp-93, Asn-112, Asp-176, Lys-212, and Arg-248–His-250.

The protein belongs to the DHPS family. Homodimer or homotrimer. Mg(2+) serves as cofactor.

It carries out the reaction (7,8-dihydropterin-6-yl)methyl diphosphate + 4-aminobenzoate = 7,8-dihydropteroate + diphosphate. Its pathway is cofactor biosynthesis; tetrahydrofolate biosynthesis; 7,8-dihydrofolate from 2-amino-4-hydroxy-6-hydroxymethyl-7,8-dihydropteridine diphosphate and 4-aminobenzoate: step 1/2. Catalyzes the condensation of para-aminobenzoate (pABA) with 6-hydroxymethyl-7,8-dihydropterin diphosphate (DHPt-PP) to form 7,8-dihydropteroate (H2Pte), the immediate precursor of folate derivatives. In Streptococcus pyogenes serotype M18 (strain MGAS8232), this protein is Dihydropteroate synthase (folP).